The following is a 215-amino-acid chain: Adenylate kinase (215 aa).

G10–T15 serves as a coordination point for ATP. The interval S30–V59 is NMP. Residues T31, R36, G57 to V59, G85 to R88, and Q92 contribute to the AMP site. The tract at residues G122–D159 is LID. ATP contacts are provided by residues R123 and V132–Y133. AMP is bound by residues R156 and R167. G201 serves as a coordination point for ATP.

The protein belongs to the adenylate kinase family. Monomer.

It is found in the cytoplasm. The enzyme catalyses AMP + ATP = 2 ADP. It functions in the pathway purine metabolism; AMP biosynthesis via salvage pathway; AMP from ADP: step 1/1. Catalyzes the reversible transfer of the terminal phosphate group between ATP and AMP. Plays an important role in cellular energy homeostasis and in adenine nucleotide metabolism. This chain is Adenylate kinase, found in Azotobacter vinelandii (strain DJ / ATCC BAA-1303).